Consider the following 238-residue polypeptide: 1-(5-phosphoribosyl)-5-[(5-phosphoribosylamino)methylideneamino] imidazole-4-carboxamide isomerase (238 aa).

Residue Asp8 is the Proton acceptor of the active site. Asp130 serves as the catalytic Proton donor.

This sequence belongs to the HisA/HisF family.

It is found in the cytoplasm. It carries out the reaction 1-(5-phospho-beta-D-ribosyl)-5-[(5-phospho-beta-D-ribosylamino)methylideneamino]imidazole-4-carboxamide = 5-[(5-phospho-1-deoxy-D-ribulos-1-ylimino)methylamino]-1-(5-phospho-beta-D-ribosyl)imidazole-4-carboxamide. The protein operates within amino-acid biosynthesis; L-histidine biosynthesis; L-histidine from 5-phospho-alpha-D-ribose 1-diphosphate: step 4/9. The sequence is that of 1-(5-phosphoribosyl)-5-[(5-phosphoribosylamino)methylideneamino] imidazole-4-carboxamide isomerase from Methanococcus maripaludis (strain C6 / ATCC BAA-1332).